The primary structure comprises 207 residues: Small ribosomal subunit protein uS4 (207 aa).

The disordered stretch occupies residues 31 to 55 (KCKLDSKPGQHGRTSGARTSDYGTQ). Positions 42 to 53 (GRTSGARTSDYG) are enriched in polar residues. Positions 97–160 (SRLDNVVYRM…KKQARIIEAL (64 aa)) constitute an S4 RNA-binding domain.

The protein belongs to the universal ribosomal protein uS4 family. In terms of assembly, part of the 30S ribosomal subunit. Contacts protein S5. The interaction surface between S4 and S5 is involved in control of translational fidelity.

One of the primary rRNA binding proteins, it binds directly to 16S rRNA where it nucleates assembly of the body of the 30S subunit. Functionally, with S5 and S12 plays an important role in translational accuracy. The sequence is that of Small ribosomal subunit protein uS4 from Burkholderia multivorans (strain ATCC 17616 / 249).